The primary structure comprises 414 residues: Esterase FrsA (414 aa).

It belongs to the FrsA family.

The enzyme catalyses a carboxylic ester + H2O = an alcohol + a carboxylate + H(+). Functionally, catalyzes the hydrolysis of esters. The polypeptide is Esterase FrsA (Escherichia coli O6:K15:H31 (strain 536 / UPEC)).